The following is a 58-amino-acid chain: UPF0337 protein CE1672 (58 aa).

Residues 1–39 (MGLGDKIRNTAEKASGKVKEATGKATDNEKLEAEGKTDQ) show a composition bias toward basic and acidic residues. The tract at residues 1–58 (MGLGDKIRNTAEKASGKVKEATGKATDNEKLEAEGKTDQFKGNAKNTVENAKDTLRGN) is disordered.

The protein belongs to the UPF0337 (CsbD) family.

The protein is UPF0337 protein CE1672 of Corynebacterium efficiens (strain DSM 44549 / YS-314 / AJ 12310 / JCM 11189 / NBRC 100395).